Here is a 376-residue protein sequence, read N- to C-terminus: Erythronate-4-phosphate dehydrogenase (376 aa).

Substrate-binding residues include serine 45 and threonine 67. Aspartate 147 lines the NAD(+) pocket. Residue arginine 209 is part of the active site. Aspartate 233 contributes to the NAD(+) binding site. Glutamate 238 is a catalytic residue. Histidine 255 serves as the catalytic Proton donor. Residue glycine 258 participates in NAD(+) binding. Tyrosine 259 provides a ligand contact to substrate.

Belongs to the D-isomer specific 2-hydroxyacid dehydrogenase family. PdxB subfamily. As to quaternary structure, homodimer.

It is found in the cytoplasm. The catalysed reaction is 4-phospho-D-erythronate + NAD(+) = (R)-3-hydroxy-2-oxo-4-phosphooxybutanoate + NADH + H(+). It participates in cofactor biosynthesis; pyridoxine 5'-phosphate biosynthesis; pyridoxine 5'-phosphate from D-erythrose 4-phosphate: step 2/5. Its function is as follows. Catalyzes the oxidation of erythronate-4-phosphate to 3-hydroxy-2-oxo-4-phosphonooxybutanoate. This chain is Erythronate-4-phosphate dehydrogenase, found in Shewanella loihica (strain ATCC BAA-1088 / PV-4).